The sequence spans 337 residues: MDETGNLTVSSATCHDTIDDFRNQVYSTLYSMISVVGFFGNGFVLYVLIKTYHKKSAFQVYMINLAVADLLCVCTLPLRVVYYVHKGIWLFGDFLCRLSTYALYVNLYCSIFFMTAMSFFRCIAIVFPVQNINLVTQKKARFVCVGIWIFVILTSSPFLMAKPQKDEKNNTKCFEPPQDNQTKNHVLVLHYVSLFVGFIIPFVIIIVCYTMIILTLLKKSMKKNLSSHKKAIGMIMVVTAAFLVSFMPYHIQRTIHLHFLHNETKPCDSVLRMQKSVVITLSLAASNCCFDPLLYFFSGGNFRKRLSTFRKHSLSSVTYVPRKKASLPEKGEEICKV.

Residues 1-28 (MDETGNLTVSSATCHDTIDDFRNQVYST) are Extracellular-facing. An N-linked (GlcNAc...) asparagine glycan is attached at N6. The chain crosses the membrane as a helical span at residues 29–49 (LYSMISVVGFFGNGFVLYVLI). Topologically, residues 50 to 57 (KTYHKKSA) are cytoplasmic. The chain crosses the membrane as a helical span at residues 58-78 (FQVYMINLAVADLLCVCTLPL). Residues 79–106 (RVVYYVHKGIWLFGDFLCRLSTYALYVN) lie on the Extracellular side of the membrane. Cysteines 96 and 173 form a disulfide. The chain crosses the membrane as a helical span at residues 107 to 127 (LYCSIFFMTAMSFFRCIAIVF). The Cytoplasmic portion of the chain corresponds to 128-141 (PVQNINLVTQKKAR). Residues 142 to 162 (FVCVGIWIFVILTSSPFLMAK) form a helical membrane-spanning segment. At 163–193 (PQKDEKNNTKCFEPPQDNQTKNHVLVLHYVS) the chain is on the extracellular side. N-linked (GlcNAc...) asparagine glycosylation is found at N169 and N180. The chain crosses the membrane as a helical span at residues 194-214 (LFVGFIIPFVIIIVCYTMIIL). The Cytoplasmic portion of the chain corresponds to 215-230 (TLLKKSMKKNLSSHKK). Residues 231-251 (AIGMIMVVTAAFLVSFMPYHI) traverse the membrane as a helical segment. The Extracellular portion of the chain corresponds to 252-276 (QRTIHLHFLHNETKPCDSVLRMQKS). N-linked (GlcNAc...) asparagine glycosylation is present at N262. Residues 277 to 297 (VVITLSLAASNCCFDPLLYFF) form a helical membrane-spanning segment. The Cytoplasmic segment spans residues 298–337 (SGGNFRKRLSTFRKHSLSSVTYVPRKKASLPEKGEEICKV).

It belongs to the G-protein coupled receptor 1 family. In terms of tissue distribution, widely expressed, with highest levels in spleen and peripheral blood leukocytes. Lower expression in several tissues, such as lung (mostly in smooth muscle bundles and alveolar macrophages), placenta, small intestine, pancreas, colon and heart.

The protein localises to the cell membrane. Receptor for cysteinyl leukotrienes mediating bronchoconstriction of individuals with and without asthma. Stimulation by LTD4 results in the contraction and proliferation of smooth muscle, edema, eosinophil migration and damage to the mucus layer in the lung. This response is mediated via a G-protein that activates a phosphatidylinositol-calcium second messenger system. The rank order of affinities for the leukotrienes is LTD4 &gt;&gt; LTE4 = LTC4 &gt;&gt; LTB4. The polypeptide is Cysteinyl leukotriene receptor 1 (CYSLTR1) (Homo sapiens (Human)).